The sequence spans 545 residues: Propane 2-monooxygenase, hydroxylase component large subunit (545 aa).

6 residues coordinate Fe cation: Glu97, Glu127, His130, Glu192, Glu226, and His229.

It belongs to the TmoA/XamoA family. As to quaternary structure, the propane 2-monooxygenase multicomponent enzyme system is composed of an electron transfer component and a monooxygenase component interacting with the effector protein PrmD. The electron transfer component is composed of a reductase (PrmB), and the monooxygenase component is formed by a large subunit (PrmA) and a small subunit (PrmC). Probably requires the presence of the chaperonin-like protein PrmG to ensure a productive folding, resulting of a soluble PrmA, which leads to the active form of PrmABCD. Requires Fe(2+) as cofactor.

It carries out the reaction propane + NADH + O2 + H(+) = propan-2-ol + NAD(+) + H2O. It catalyses the reaction phenol + NADH + O2 + H(+) = hydroquinone + NAD(+) + H2O. Functionally, component of the propane 2-monooxygenase multicomponent enzyme system which is involved in the degradation of propane via the O2-dependent hydroxylation of propane. Under acetone induction, also able to catalyze the oxidation of phenol to yield hydroquinone. The chain is Propane 2-monooxygenase, hydroxylase component large subunit from Gordonia sp. (strain TY-5).